The sequence spans 310 residues: Cytochrome f (310 aa).

Positions 1–27 (MRRILTFFLGSIIIGLSIIISPSSSFA) are cleaved as a signal peptide. Heme-binding residues include Y28, C48, C51, and H52. The helical transmembrane segment at 277–297 (VIGLIAFFAGVALTQILLVLK) threads the bilayer.

Belongs to the cytochrome f family. As to quaternary structure, the 4 large subunits of the cytochrome b6-f complex are cytochrome b6, subunit IV (17 kDa polypeptide, PetD), cytochrome f and the Rieske protein, while the 4 small subunits are PetG, PetL, PetM and PetN. The complex functions as a dimer. It depends on heme as a cofactor.

It is found in the cellular thylakoid membrane. Functionally, component of the cytochrome b6-f complex, which mediates electron transfer between photosystem II (PSII) and photosystem I (PSI), cyclic electron flow around PSI, and state transitions. In Prochlorococcus marinus (strain SARG / CCMP1375 / SS120), this protein is Cytochrome f.